The following is a 208-amino-acid chain: Large ribosomal subunit protein eL13 (208 aa).

Belongs to the eukaryotic ribosomal protein eL13 family.

The chain is Large ribosomal subunit protein eL13 (RPL13) from Chlamydomonas sp. (strain W80).